The sequence spans 116 residues: MVPKPLSLLLLLLLALSAAVVGGRKRVAAGGWRPIENLNSAEVQDVAQFAVSEHNKQANDELQYQSVVRGYTQVVAGTNYRLVIAAKDGAVVGNYEAVVWDKPWMHFRNLTSFRKV.

The signal sequence occupies residues Met1–Gly22. Positions Gly30–Gly89 constitute a Cystatin domain. Residues Gln73 to Gly77 carry the Secondary area of contact motif. The N-linked (GlcNAc...) asparagine glycan is linked to Asn109.

It belongs to the cystatin family. Phytocystatin subfamily.

The protein localises to the secreted. Functionally, specific inhibitor of papain family cysteine proteinases. In Actinidia chinensis var. chinensis (Chinese soft-hair kiwi), this protein is Cysteine proteinase inhibitor 1.